The chain runs to 493 residues: Galactose-1-phosphate uridylyltransferase (493 aa).

It belongs to the galactose-1-phosphate uridylyltransferase type 2 family.

It is found in the cytoplasm. It catalyses the reaction alpha-D-galactose 1-phosphate + UDP-alpha-D-glucose = alpha-D-glucose 1-phosphate + UDP-alpha-D-galactose. Its pathway is carbohydrate metabolism; galactose metabolism. The polypeptide is Galactose-1-phosphate uridylyltransferase (galT) (Lactococcus lactis subsp. lactis (strain IL1403) (Streptococcus lactis)).